Reading from the N-terminus, the 508-residue chain is Anthranilate synthase component 1 (508 aa).

Residues Ser-49 and 282-284 (PYM) each bind L-tryptophan. Chorismate is bound at residue 317–318 (GT). Position 344 (Glu-344) interacts with Mg(2+). Chorismate-binding positions include Tyr-432, Arg-452, 466–468 (GAG), and Gly-468. Position 481 (Glu-481) interacts with Mg(2+).

This sequence belongs to the anthranilate synthase component I family. Heterotetramer consisting of two non-identical subunits: a beta subunit (TrpG) and a large alpha subunit (TrpE). It depends on Mg(2+) as a cofactor.

It catalyses the reaction chorismate + L-glutamine = anthranilate + pyruvate + L-glutamate + H(+). The protein operates within amino-acid biosynthesis; L-tryptophan biosynthesis; L-tryptophan from chorismate: step 1/5. With respect to regulation, feedback inhibited by tryptophan. Functionally, part of a heterotetrameric complex that catalyzes the two-step biosynthesis of anthranilate, an intermediate in the biosynthesis of L-tryptophan. In the first step, the glutamine-binding beta subunit (TrpG) of anthranilate synthase (AS) provides the glutamine amidotransferase activity which generates ammonia as a substrate that, along with chorismate, is used in the second step, catalyzed by the large alpha subunit of AS (TrpE) to produce anthranilate. In the absence of TrpG, TrpE can synthesize anthranilate directly from chorismate and high concentrations of ammonia. In Geobacillus stearothermophilus (Bacillus stearothermophilus), this protein is Anthranilate synthase component 1 (trpE).